A 652-amino-acid chain; its full sequence is O-fucosyltransferase 15 (652 aa).

Residues 91–111 (TAAFVIVLVGFFIFVNWFMLS) form a helical; Signal-anchor for type II membrane protein membrane-spanning segment. N-linked (GlcNAc...) asparagine glycosylation is found at N139, N169, and N251. 426–428 (HLR) serves as a coordination point for substrate. 3 N-linked (GlcNAc...) asparagine glycosylation sites follow: N464, N546, and N607.

Belongs to the glycosyltransferase GT106 family.

The protein resides in the membrane. Its pathway is glycan metabolism. The polypeptide is O-fucosyltransferase 15 (Arabidopsis thaliana (Mouse-ear cress)).